We begin with the raw amino-acid sequence, 685 residues long: Probable transketolase (685 aa).

A substrate-binding site is contributed by H32. Residues H72 and 121-123 contribute to the thiamine diphosphate site; that span reads GPL. Mg(2+) is bound at residue D162. The thiamine diphosphate site is built by G163 and N192. N192 and I194 together coordinate Mg(2+). Substrate contacts are provided by H268, R363, and S390. H268 contributes to the thiamine diphosphate binding site. The thiamine diphosphate site is built by E422 and F448. E422 acts as the Proton donor in catalysis. Residues H472, D480, and R531 each contribute to the substrate site.

It belongs to the transketolase family. In terms of assembly, homodimer. It depends on Mg(2+) as a cofactor. Ca(2+) serves as cofactor. The cofactor is Mn(2+). Co(2+) is required as a cofactor. Requires thiamine diphosphate as cofactor.

It carries out the reaction D-sedoheptulose 7-phosphate + D-glyceraldehyde 3-phosphate = aldehydo-D-ribose 5-phosphate + D-xylulose 5-phosphate. Its function is as follows. Catalyzes the transfer of a two-carbon ketol group from a ketose donor to an aldose acceptor, via a covalent intermediate with the cofactor thiamine pyrophosphate. The polypeptide is Probable transketolase (Schizosaccharomyces pombe (strain 972 / ATCC 24843) (Fission yeast)).